The chain runs to 60 residues: Large ribosomal subunit protein eL37 (60 aa).

Positions 19, 22, 34, and 37 each coordinate Zn(2+). The segment at 19–37 (CRRCGRMSYHKRHKICSSC) adopts a C4-type zinc-finger fold.

It belongs to the eukaryotic ribosomal protein eL37 family. Requires Zn(2+) as cofactor.

Its function is as follows. Binds to the 23S rRNA. This is Large ribosomal subunit protein eL37 from Methanospirillum hungatei JF-1 (strain ATCC 27890 / DSM 864 / NBRC 100397 / JF-1).